A 792-amino-acid chain; its full sequence is Phenylalanine--tRNA ligase beta subunit (792 aa).

In terms of domain architecture, tRNA-binding spans 39–147; that stretch reads ARTLEKVVVG…ADAPIGKNIQ (109 aa). Residues 400–475 enclose the B5 domain; sequence PKIPRIILRP…HLYGYDRIPQ (76 aa). Residues Asp-453, Asp-459, Glu-462, and Glu-463 each coordinate Mg(2+). An FDX-ACB domain is found at 697-791; it reads SKFPSIRRDI…LERKFNAKLR (95 aa).

This sequence belongs to the phenylalanyl-tRNA synthetase beta subunit family. Type 1 subfamily. As to quaternary structure, tetramer of two alpha and two beta subunits. Mg(2+) is required as a cofactor.

It is found in the cytoplasm. It carries out the reaction tRNA(Phe) + L-phenylalanine + ATP = L-phenylalanyl-tRNA(Phe) + AMP + diphosphate + H(+). The chain is Phenylalanine--tRNA ligase beta subunit from Coxiella burnetii (strain RSA 493 / Nine Mile phase I).